The primary structure comprises 979 residues: Probable serine/threonine-protein kinase iksA (979 aa).

Residues Asn32, Asn110, Asn120, Asn121, Asn147, Asn155, Asn161, Asn220, Asn231, and Asn243 are each glycosylated (N-linked (GlcNAc...) asparagine). Positions 207–245 are disordered; that stretch reads SKSGVNNNNNNNNNDSTTTNNNNNNNTTPPQQQQQQNSS. The segment covering 212–244 has biased composition (low complexity); that stretch reads NNNNNNNNNDSTTTNNNNNNNTTPPQQQQQQNS. Positions 261 to 568 constitute a Protein kinase domain; that stretch reads FKEDIKIGSG…ISQILSTHFI (308 aa). Residues 267–275 and Lys293 contribute to the ATP site; that span reads IGSGGFGSV. The active-site Proton acceptor is Asp397. Residues Asn592, Asn597, Asn615, Asn645, Asn646, Asn663, and Asn699 are each glycosylated (N-linked (GlcNAc...) asparagine). Polar residues predominate over residues 593–602; the sequence is TSVHNTTAST. The segment at 593–666 is disordered; sequence TSVHNTTAST…LGNNNNNNTN (74 aa). A compositionally biased stretch (low complexity) spans 610–666; that stretch reads SISTTNSTTSSSSSTATSSSLSSTTIATTSSSNAINNTTATTTTNSNLGNNNNNNTN. A compositionally biased stretch (acidic residues) spans 713 to 727; it reads NDDIIIDDDDDDDDS. A disordered region spans residues 713-793; the sequence is NDDIIIDDDD…GNNGIRKALP (81 aa). Low complexity-rich tracts occupy residues 728–737 and 753–773; these read TNNNDTNNTD and NNKK…SSNK. Asn731 and Asn734 each carry an N-linked (GlcNAc...) asparagine glycan. The helical transmembrane segment at 846–866 threads the bilayer; that stretch reads FPSPILLYPLLLLSLIPILVV. Asn870 and Asn894 each carry an N-linked (GlcNAc...) asparagine glycan. Helical transmembrane passes span 912 to 932 and 956 to 976; these read INTI…VLLP and FPLL…IFIF.

Belongs to the protein kinase superfamily. Ser/Thr protein kinase family.

It localises to the membrane. It catalyses the reaction L-seryl-[protein] + ATP = O-phospho-L-seryl-[protein] + ADP + H(+). The catalysed reaction is L-threonyl-[protein] + ATP = O-phospho-L-threonyl-[protein] + ADP + H(+). In Dictyostelium discoideum (Social amoeba), this protein is Probable serine/threonine-protein kinase iksA (iksA).